We begin with the raw amino-acid sequence, 295 residues long: 4-hydroxy-tetrahydrodipicolinate synthase (295 aa).

Thr46 serves as a coordination point for pyruvate. Tyr135 (proton donor/acceptor) is an active-site residue. The active-site Schiff-base intermediate with substrate is the Lys164. Pyruvate is bound at residue Ile205.

It belongs to the DapA family. As to quaternary structure, homotetramer; dimer of dimers.

The protein resides in the cytoplasm. The enzyme catalyses L-aspartate 4-semialdehyde + pyruvate = (2S,4S)-4-hydroxy-2,3,4,5-tetrahydrodipicolinate + H2O + H(+). The protein operates within amino-acid biosynthesis; L-lysine biosynthesis via DAP pathway; (S)-tetrahydrodipicolinate from L-aspartate: step 3/4. In terms of biological role, catalyzes the condensation of (S)-aspartate-beta-semialdehyde [(S)-ASA] and pyruvate to 4-hydroxy-tetrahydrodipicolinate (HTPA). The protein is 4-hydroxy-tetrahydrodipicolinate synthase of Aliarcobacter butzleri (strain RM4018) (Arcobacter butzleri).